A 1041-amino-acid chain; its full sequence is Putative transcription elongation factor SPT5 homolog 1 (1041 aa).

Residues 1 to 133 (MPRSRDEDDE…ERGDRRYERR (133 aa)) are disordered. Composition is skewed to acidic residues over residues 7–32 (EDDELDGDYEALDLEEEEEEDEEEEE), 53–69 (DYAEEDSQEEDDDDEDY), and 99–114 (DDEDEEEEDEAEDDFI). Position 59 is a phosphoserine (serine 59). Residues 122–133 (PDERGDRRYERR) show a composition bias toward basic and acidic residues. 4 KOW domains span residues 273–300 (DLSRDTWVRMKIGTYKGDLAKVVDVDNV), 425–452 (HFMKGDAVIVIKGDLKNLKGWVEKVDEE), 477–504 (YFEPGNHVKVVSGTHEGATGMVVKVDQH), and 601–628 (VIAVKDDVRVIEGPSKGKQGPVKHIYKG). 2 disordered regions span residues 662-713 (NRNG…GDDS) and 768-921 (DTSR…GTGL). Residues 691-703 (GRGGGYNNSGGRH) are compositionally biased toward gly residues. Positions 712–739 (DSLLGTTVKIRLGPFKGYRGPVVEVKGN) constitute a KOW 5 domain. Basic and acidic residues predominate over residues 804-814 (DGMRTPMRDRA). Polar residues-rich tracts occupy residues 835 to 844 (SWGTSPQYQP) and 893 to 904 (TPGQPMTPSSAS). Residues 988-1015 (PPRKSDRVKIVGGQYRGSTGKLIGIDGS) form the KOW 6 domain.

It belongs to the SPT5 family.

The protein resides in the nucleus. Functionally, may regulate transcription elongation by RNA polymerase II. May enhance transcriptional pausing at sites proximal to the promoter, which may in turn facilitate the assembly of an elongation competent RNA polymerase II complex. The sequence is that of Putative transcription elongation factor SPT5 homolog 1 from Arabidopsis thaliana (Mouse-ear cress).